We begin with the raw amino-acid sequence, 582 residues long: SUMO-activating enzyme subunit uba-2 (582 aa).

Residues 20-25, aspartate 44, 52-55, lysine 68, 91-92, and 113-118 each bind ATP; these read GAGGIG, NLNR, SI, and DNRAAR. Zn(2+) is bound by residues cysteine 154 and cysteine 157. Cysteine 170 functions as the Glycyl thioester intermediate in the catalytic mechanism. The segment covering 204–214 has biased composition (acidic residues); the sequence is SPDMDAVDPDN. A disordered region spans residues 204-235; sequence SPDMDAVDPDNTEAVTTEKEKEAMKEEPAPVG. Residues 219–231 show a composition bias toward basic and acidic residues; sequence TTEKEKEAMKEEP. The Zn(2+) site is built by cysteine 431 and cysteine 434. A compositionally biased stretch (basic and acidic residues) spans 531–570; it reads FEVARSEKEPEPDDRKRKADGSEEPEAKRQKVEEKDDKNG. The interval 531–582 is disordered; sequence FEVARSEKEPEPDDRKRKADGSEEPEAKRQKVEEKDDKNGNEAVAEITETMA.

This sequence belongs to the ubiquitin-activating E1 family. Heterodimer with aos-1.

Its pathway is protein modification; protein sumoylation. In terms of biological role, the dimeric enzyme acts as an E1 ligase for smo-1. It mediates ATP-dependent activation of smo-1 and formation of a thioester with a conserved cysteine residue on uba-2. The polypeptide is SUMO-activating enzyme subunit uba-2 (uba-2) (Caenorhabditis elegans).